The sequence spans 410 residues: MTGTSLTDTSSGLYFRDHSQGWLLRAQKQISYEVRLRDGIFRPECTDLLEQGAGTPGRSRRFVVVDSNVDLMYGNRIRSYFDYHGVDCSIMVVEANETLKNLETATRIVDEIDAFGIARRKEPLIVIGGGVLMDIVGLVASLYRRGAPFVRVPTTLIGLVDAGVGVKTGVNFNGHKNRLGTYTPADLTLLDRQFLATLDRRHIGNGLAEILKIALIKDLSLFAALEEHGPTLLDEKFQGSTAAGDRAARSVLHSAIHGMLDELQPNLWEAELERCVDYGHTFSPTVEMRALPELLHGEAVCVDMALTTVIAWRRGLLTEAQRDRIFAVMAALELPSWHPILDPDVLVNALQDTVRHRDGLQRLPLPVGIGGVTFVNDVTPRELEAAVTLQQELGDARTPKTSGDRGGRNL.

NAD(+) contacts are provided by residues aspartate 66, 97–100 (ETLK), 130–134 (GVLMD), 154–155 (TT), lysine 167, lysine 176, and 194–197 (FLAT). Residue lysine 167 is part of the active site. Residues glutamate 209, histidine 280, and histidine 296 each coordinate a divalent metal cation.

It belongs to the sugar phosphate cyclases superfamily. EEVS family. NAD(+) serves as cofactor. The cofactor is Co(2+).

The catalysed reaction is D-sedoheptulose 7-phosphate = 2-epi-5-epi-valiolone + phosphate. Functionally, catalyzes the cyclization of D-sedoheptulose 7-phosphate to 2-epi-5-epi-valiolone. Involved in salbostatin biosynthesis. This chain is 2-epi-5-epi-valiolone synthase, found in Streptomyces albus (strain ATCC 21838 / DSM 41398 / FERM P-419 / JCM 4703 / NBRC 107858).